A 149-amino-acid polypeptide reads, in one-letter code: F420H(2)-dependent quinone reductase MT1299 (149 aa).

Coenzyme F420-(gamma-Glu)n contacts are provided by residues 48 to 50 (AKT), 54 to 59 (RTTSLT), 70 to 73 (VASK), 81 to 85 (GWYHN), and Y130.

Belongs to the F420H(2)-dependent quinone reductase family.

The protein resides in the cell membrane. It catalyses the reaction oxidized coenzyme F420-(gamma-L-Glu)(n) + a quinol + H(+) = reduced coenzyme F420-(gamma-L-Glu)(n) + a quinone. Functionally, involved in a F420-dependent anti-oxidant mechanism that protects M.tuberculosis against oxidative stress and bactericidal agents. Catalyzes the F420H(2)-dependent two-electron reduction of quinones to dihydroquinones, thereby preventing the formation of cytotoxic semiquinones obtained by the one-electron reduction pathway. In vitro, catalyzes the reduction of menadione to menadiol; since menaquinone is the sole quinone electron carrier in the respiratory chain in M.tuberculosis, the physiological electron acceptor for Fqr-mediated F420H(2) oxidation is therefore likely to be the endogenous menaquinone found in the membrane fraction of M.tuberculosis. The protein is F420H(2)-dependent quinone reductase MT1299 of Mycobacterium tuberculosis (strain CDC 1551 / Oshkosh).